We begin with the raw amino-acid sequence, 146 residues long: MRNIAIKFAAAGILAMLAAPALAENIEVHMLNKGAEGAMVFEPAYIKANPGDTVTFIPVDKGHNVESIKDMIPEGAEKFKSKINENYVLTVTQPGAYLVKCTPHYAMGMIALIAVGDSPANLDQIVSAKKPKIVQERLEKVIASAK.

The N-terminal stretch at 1–23 is a signal peptide; that stretch reads MRNIAIKFAAAGILAMLAAPALA. The Plastocyanin-like domain occupies 28 to 116; it reads VHMLNKGAEG…MGMIALIAVG (89 aa). Cu cation-binding residues include histidine 63, cysteine 101, histidine 104, and methionine 109.

Requires Cu cation as cofactor.

It is found in the periplasm. This soluble electron transfer copper protein is required for the inactivation of copper-containing nitrite reductase in the presence of oxygen. Serves as a direct electron donor to the nitrite reductase. The chain is Pseudoazurin from Alcaligenes faecalis.